A 536-amino-acid polypeptide reads, in one-letter code: Feruloyl esterase B (536 aa).

The first 20 residues, 1 to 20 (MKTSIVLSIVALFLTSKASA), serve as a signal peptide directing secretion. A CBM10 domain is found at 21–59 (DCWSERLGWPCCSDSNAEVIYVDDDGDWGVENNDWCGIQ). Residues 22–59 (CWSERLGWPCCSDSNAEVIYVDDDGDWGVENNDWCGIQ) are cellulose-binding. Asparagine 65 carries an N-linked (GlcNAc...) asparagine glycan. 12 tandem repeats follow at residues 78 to 90 (NQGG…DFGG), 91 to 103 (NQGG…DFGG), 104 to 116 (NQGG…DFGG), 117 to 129 (NQGG…DFGG), 134 to 146 (NQGG…DFGG), 151 to 163 (NQGG…DFGG), 164 to 176 (NQGG…DFGG), 181 to 193 (NQGG…DFGG), 194 to 206 (NQGG…DFGG), 211 to 223 (NQGG…DFGG), 224 to 236 (NQGG…DFGG), and 237 to 249 (NQGG…DFGG). The tract at residues 78 to 249 (NQGGGMPWGD…GGMQWGDFGG (172 aa)) is 12 X 13 AA repeats of N-Q-G-G-G-M-[PQ]-W-G-D-F-G-G. Positions 203–252 (DFGGNQGGNQGGGMPWGDFGGNQGGGMQWGDFGGNQGGGMQWGDFGGNQG) are enriched in gly residues. Residues 203–273 (DFGGNQGGNQ…SGPTVEYSTD (71 aa)) form a disordered region. Positions 257-536 (WGNQGGNSGP…WDFVKQFSLP (280 aa)) are catalytic.

In terms of assembly, component of the multienzyme cellulase-hemicellulase complex.

It is found in the secreted. The catalysed reaction is feruloyl-polysaccharide + H2O = ferulate + polysaccharide.. Inhibited by the specific serine esterase inhibitor AEBSF. Involved in degradation of plant cell walls. Hydrolyzes of the feruloyl-arabinose ester bond in arabinoxylans as well as the feruloyl-galactose and feruloyl-arabinose ester bonds in pectin. The chain is Feruloyl esterase B (ESTA) from Piromyces equi.